The primary structure comprises 599 residues: Kinesin light chain 2 (599 aa).

Positions 78–143 (ILALSSHLGA…KQHLLFMSQI (66 aa)) form a coiled coil. The span at 154–163 (EKGDVPKDSL) shows a compositional bias: basic and acidic residues. The segment at 154-188 (EKGDVPKDSLDDLFPNEDEQSPAPSPGGGDVAAQH) is disordered. 2 positions are modified to phosphoserine: serine 174 and serine 178. TPR repeat units follow at residues 197–230 (LRTL…LEKT), 239–272 (ATML…REKT), 281–314 (AATL…REKV), 323–356 (AKQL…YATR), and 365–398 (AKTK…AHEK). Serine 443 bears the Phosphoserine mark. Residues 447 to 480 (NTTLRTLGALYRPEGKLEAAHTLEDCASRSRKQG) form a TPR 6 repeat. The tract at residues 492 to 541 (LLKDGSGRGHRRGSRDVAGPQSESDLEESGPAAEWSGDGSGSLRRSGSFG) is disordered. Residues serine 505 and serine 515 each carry the phosphoserine modification. A compositionally biased stretch (low complexity) spans 532–541 (GSLRRSGSFG). A phosphoserine mark is found at serine 574, serine 575, and serine 582.

This sequence belongs to the kinesin light chain family. Oligomeric complex composed of two heavy chains and two light chains. Interacts (via TPR repeats) with PLEKHM2.

The protein localises to the cytoplasm. It is found in the cytoskeleton. The protein resides in the lysosome membrane. Functionally, kinesin is a microtubule-associated force-producing protein that plays a role in organelle transport. The light chain functions in coupling of cargo to the heavy chain or in the modulation of its ATPase activity. Through binding with PLEKHM2 and ARL8B, recruits kinesin-1 to lysosomes and hence direct lysosomes movement toward microtubule plus ends. The protein is Kinesin light chain 2 of Mus musculus (Mouse).